A 247-amino-acid chain; its full sequence is ATP synthase subunit a, chloroplastic (247 aa).

A run of 5 helical transmembrane segments spans residues 38-58 (QVLI…TVAV), 95-115 (VPFI…GALL), 134-154 (INTT…AGLT), 199-219 (LVVV…VMFL), and 220-240 (GLFT…AYIG).

Belongs to the ATPase A chain family. In terms of assembly, F-type ATPases have 2 components, CF(1) - the catalytic core - and CF(0) - the membrane proton channel. CF(1) has five subunits: alpha(3), beta(3), gamma(1), delta(1), epsilon(1). CF(0) has four main subunits: a, b, b' and c.

It localises to the plastid. The protein resides in the chloroplast thylakoid membrane. Functionally, key component of the proton channel; it plays a direct role in the translocation of protons across the membrane. The protein is ATP synthase subunit a, chloroplastic of Acorus calamus var. americanus (American sweet flag).